We begin with the raw amino-acid sequence, 714 residues long: Polyribonucleotide nucleotidyltransferase (714 aa).

Mg(2+) contacts are provided by D488 and D494. Positions 555–614 constitute a KH domain; it reads PRIEVMNIPTDKIRDVIGSGGKVIREIVEKTGAKINIEDDGTVKIASSNGKEIEAAKKWI. The S1 motif domain occupies 624–692; sequence GEIYEGTVVK…ERGKVRLSMK (69 aa).

It belongs to the polyribonucleotide nucleotidyltransferase family. The cofactor is Mg(2+).

The protein resides in the cytoplasm. The enzyme catalyses RNA(n+1) + phosphate = RNA(n) + a ribonucleoside 5'-diphosphate. Involved in mRNA degradation. Catalyzes the phosphorolysis of single-stranded polyribonucleotides processively in the 3'- to 5'-direction. In Brucella abortus biovar 1 (strain 9-941), this protein is Polyribonucleotide nucleotidyltransferase.